We begin with the raw amino-acid sequence, 238 residues long: Ribosomal RNA small subunit methyltransferase G (238 aa).

S-adenosyl-L-methionine contacts are provided by residues Gly78, Phe83, 129–130, and Arg148; that span reads AE. A disordered region spans residues 217-238; the sequence is KKKETPKKYPRKAGTPAKSPIK.

It belongs to the methyltransferase superfamily. RNA methyltransferase RsmG family.

It localises to the cytoplasm. Its function is as follows. Specifically methylates the N7 position of a guanine in 16S rRNA. The sequence is that of Ribosomal RNA small subunit methyltransferase G from Lactococcus lactis subsp. cremoris (strain SK11).